The primary structure comprises 33 residues: Photosystem II reaction center protein T (33 aa).

The chain crosses the membrane as a helical span at residues 3-23 (ALVYTFLLVSTLGIIFFAIFF).

This sequence belongs to the PsbT family. PSII is composed of 1 copy each of membrane proteins PsbA, PsbB, PsbC, PsbD, PsbE, PsbF, PsbH, PsbI, PsbJ, PsbK, PsbL, PsbM, PsbT, PsbY, PsbZ, Psb30/Ycf12, at least 3 peripheral proteins of the oxygen-evolving complex and a large number of cofactors. It forms dimeric complexes.

The protein localises to the plastid. It is found in the chloroplast thylakoid membrane. Functionally, found at the monomer-monomer interface of the photosystem II (PS II) dimer, plays a role in assembly and dimerization of PSII. PSII is a light-driven water plastoquinone oxidoreductase, using light energy to abstract electrons from H(2)O, generating a proton gradient subsequently used for ATP formation. The protein is Photosystem II reaction center protein T of Asparagus officinalis (Garden asparagus).